The sequence spans 238 residues: Orotidine 5'-phosphate decarboxylase (238 aa).

Substrate contacts are provided by residues Asp-11, Lys-32, 59–68, Thr-123, Arg-185, Gln-194, Gly-214, and Arg-215; that span reads DLKFHDIPNT. The Proton donor role is filled by Lys-61.

Belongs to the OMP decarboxylase family. Type 1 subfamily. Homodimer.

It catalyses the reaction orotidine 5'-phosphate + H(+) = UMP + CO2. The protein operates within pyrimidine metabolism; UMP biosynthesis via de novo pathway; UMP from orotate: step 2/2. Catalyzes the decarboxylation of orotidine 5'-monophosphate (OMP) to uridine 5'-monophosphate (UMP). This is Orotidine 5'-phosphate decarboxylase from Nostoc sp. (strain PCC 7120 / SAG 25.82 / UTEX 2576).